Here is a 332-residue protein sequence, read N- to C-terminus: 2,3-diketo-L-gulonate reductase (332 aa).

Catalysis depends on histidine 44, which acts as the Proton donor. Residues 168–174 (ITMVDMS), 224–225 (WK), and 304–306 (GHE) contribute to the NAD(+) site.

Belongs to the LDH2/MDH2 oxidoreductase family. DlgD subfamily. In terms of assembly, homodimer.

The protein resides in the cytoplasm. The catalysed reaction is 3-dehydro-L-gulonate + NAD(+) = 2,3-dioxo-L-gulonate + NADH + H(+). It catalyses the reaction 3-dehydro-L-gulonate + NADP(+) = 2,3-dioxo-L-gulonate + NADPH + H(+). Its function is as follows. Catalyzes the reduction of 2,3-diketo-L-gulonate in the presence of NADH, to form 3-keto-L-gulonate. The protein is 2,3-diketo-L-gulonate reductase of Salmonella paratyphi A (strain ATCC 9150 / SARB42).